We begin with the raw amino-acid sequence, 83 residues long: Short neurotoxin OKI-Ed (83 aa).

The first 21 residues, 1–21, serve as a signal peptide directing secretion; it reads MKTLLLTLVVVTIVCLDLGYT. Cystine bridges form between cysteine 24-cysteine 45, cysteine 38-cysteine 62, cysteine 64-cysteine 75, and cysteine 76-cysteine 81.

It belongs to the three-finger toxin family. Short-chain subfamily. Type I alpha-neurotoxin sub-subfamily. In terms of tissue distribution, expressed by the venom gland.

The protein localises to the secreted. In terms of biological role, binds to muscle nicotinic acetylcholine receptor (nAChR) and inhibit acetylcholine from binding to the receptor, thereby impairing neuromuscular transmission. This is Short neurotoxin OKI-Ed from Laticauda semifasciata (Black-banded sea krait).